The following is a 95-amino-acid chain: uncharacterized protein (95 aa).

The signal sequence occupies residues 1–17; sequence MTSSLVIYIFLWSRLIC.

This is an uncharacterized protein from Saccharomyces cerevisiae (strain ATCC 204508 / S288c) (Baker's yeast).